The sequence spans 292 residues: Glycine--tRNA ligase alpha subunit (292 aa).

Belongs to the class-II aminoacyl-tRNA synthetase family. As to quaternary structure, tetramer of two alpha and two beta subunits.

It localises to the cytoplasm. The catalysed reaction is tRNA(Gly) + glycine + ATP = glycyl-tRNA(Gly) + AMP + diphosphate. This chain is Glycine--tRNA ligase alpha subunit, found in Clostridioides difficile (strain 630) (Peptoclostridium difficile).